Consider the following 284-residue polypeptide: Syntaxin-like protein psy1 (284 aa).

A coiled-coil region spans residues 23–57; that stretch reads EEIDHIRDAIRQIEDNVGRIEMLHQQSLQEIDEAN. Residues 181–243 enclose the t-SNARE coiled-coil homology domain; that stretch reads LREVQERHAD…GEGTQHMDRA (63 aa). Residues 260–280 form a helical; Anchor for type IV membrane protein membrane-spanning segment; that stretch reads ICVVIICVIVAVLCGVLIPVL.

This sequence belongs to the syntaxin family.

It localises to the cell membrane. Its subcellular location is the prospore membrane. The polypeptide is Syntaxin-like protein psy1 (psy1) (Schizosaccharomyces pombe (strain 972 / ATCC 24843) (Fission yeast)).